We begin with the raw amino-acid sequence, 248 residues long: ATP synthase subunit a, chloroplastic (248 aa).

5 helical membrane passes run 37–57, 96–116, 135–155, 200–220, and 221–241; these read AQVLITSWIVIAILLSLAVLA, VPFIGTMFLFIFVSNWSGALF, INTTVALALLTSVAYFYAGLH, LVVAVLISLVPLVVPIPMMFL, and GLFTSAIQALIFATLAAAYIG.

This sequence belongs to the ATPase A chain family. In terms of assembly, F-type ATPases have 2 components, CF(1) - the catalytic core - and CF(0) - the membrane proton channel. CF(1) has five subunits: alpha(3), beta(3), gamma(1), delta(1), epsilon(1). CF(0) has four main subunits: a, b, b' and c.

It is found in the plastid. The protein resides in the chloroplast thylakoid membrane. Its function is as follows. Key component of the proton channel; it plays a direct role in the translocation of protons across the membrane. This chain is ATP synthase subunit a, chloroplastic, found in Marchantia polymorpha (Common liverwort).